The following is a 304-amino-acid chain: Killer cell immunoglobulin-like receptor 2DS5 (304 aa).

A signal peptide spans 1-21 (MSLMVISMACVAFFLLQGAWP). Over 22 to 245 (HEGFRRKPSL…SETGNPRHLH (224 aa)) the chain is Extracellular. Ig-like C2-type domains lie at 42-107 (EETV…VTHS) and 142-205 (GESV…FRDS). Intrachain disulfides connect Cys49-Cys100 and Cys149-Cys198. N-linked (GlcNAc...) asparagine glycans are attached at residues Asn67, Asn84, Asn178, and Asn223. Residues 246–264 (VLIGTSVVKLPFTILLFFL) form a helical membrane-spanning segment. The Cytoplasmic segment spans residues 265–304 (LHRWCSNKKNASVMDQGPAGNRTVNREDSDEQDHQEVSYA). Residues 275–304 (ASVMDQGPAGNRTVNREDSDEQDHQEVSYA) are disordered. Residues 288-304 (VNREDSDEQDHQEVSYA) show a composition bias toward basic and acidic residues.

Belongs to the immunoglobulin superfamily. Interacts with TYROBP. N-glycosylated, glycosylation varies depending on the allele which alters cell surface expression levels. In terms of tissue distribution, expressed on a discrete subset of peripheral blood NK cells.

The protein localises to the cell membrane. Activating natural killer (NK) receptor that recognizes C2 epitopes of HLA-C alleles. Bridging the innate and adaptive immune systems, NK cells express a number of cell surface receptors which either inhibit or stimulate their cytotoxicity. Able to activate NK cells citotoxicity and cytokine production such as IFNG. Receptor functions are attenuated even lost in some alleles, such as KIR2DS5*002 represented in this entry. The polypeptide is Killer cell immunoglobulin-like receptor 2DS5 (Homo sapiens (Human)).